The primary structure comprises 207 residues: Holliday junction branch migration complex subunit RuvA (207 aa).

Residues 1–63 (MIDSLHGEVL…DDGIDLYAFE (63 aa)) form a domain I region. The segment at 64 to 142 (SDEARQMFAM…VFDSGDSASE (79 aa)) is domain II. The tract at residues 143–154 (PQSGVGGNSEAE) is flexible linker. Residues 155–207 (VDSGVVGTVTQALVELGFPEKQAEKTATSAAAEGGSVSEILKRALRSMSSERN) form a domain III region.

This sequence belongs to the RuvA family. Homotetramer. Forms an RuvA(8)-RuvB(12)-Holliday junction (HJ) complex. HJ DNA is sandwiched between 2 RuvA tetramers; dsDNA enters through RuvA and exits via RuvB. An RuvB hexamer assembles on each DNA strand where it exits the tetramer. Each RuvB hexamer is contacted by two RuvA subunits (via domain III) on 2 adjacent RuvB subunits; this complex drives branch migration. In the full resolvosome a probable DNA-RuvA(4)-RuvB(12)-RuvC(2) complex forms which resolves the HJ.

The protein localises to the cytoplasm. Functionally, the RuvA-RuvB-RuvC complex processes Holliday junction (HJ) DNA during genetic recombination and DNA repair, while the RuvA-RuvB complex plays an important role in the rescue of blocked DNA replication forks via replication fork reversal (RFR). RuvA specifically binds to HJ cruciform DNA, conferring on it an open structure. The RuvB hexamer acts as an ATP-dependent pump, pulling dsDNA into and through the RuvAB complex. HJ branch migration allows RuvC to scan DNA until it finds its consensus sequence, where it cleaves and resolves the cruciform DNA. This is Holliday junction branch migration complex subunit RuvA from Corynebacterium kroppenstedtii (strain DSM 44385 / JCM 11950 / CIP 105744 / CCUG 35717).